Consider the following 591-residue polypeptide: L-lactate dehydrogenase (cytochrome) (591 aa).

The transit peptide at 1-80 (MLKYKPLLKI…LNWHNGQIDN (80 aa)) directs the protein to the mitochondrion. Residues 88–165 (KQKISPAEVA…APEKKLGPLQ (78 aa)) enclose the Cytochrome b5 heme-binding domain. Residues H123, H146, Y177, Q219, and Y223 each coordinate heme b. The 367-residue stretch at 197-563 (PPLDNIINLY…KPDLLDLSTL (367 aa)) folds into the FMN hydroxy acid dehydrogenase domain. Residue Y223 participates in pyruvate binding. FMN is bound by residues 275–278 (SATA), S308, and Q332. Y334 is a pyruvate binding site. T360 contributes to the FMN binding site. Position 376 (K376) interacts with heme b. Position 429 (K429) interacts with FMN. H453 and R456 together coordinate pyruvate. H453 (proton acceptor) is an active-site residue. Residues 489–493 (DGGVR) and 512–513 (GR) contribute to the FMN site.

The protein in the N-terminal section; belongs to the cytochrome b5 family. This sequence in the C-terminal section; belongs to the FMN-dependent alpha-hydroxy acid dehydrogenase family. Homotetramer. Requires FMN as cofactor. Heme b serves as cofactor.

Its subcellular location is the mitochondrion intermembrane space. It catalyses the reaction (S)-lactate + 2 Fe(III)-[cytochrome c] = 2 Fe(II)-[cytochrome c] + pyruvate + 2 H(+). Catalyzes the oxidation of (S)-lactate (L-lactate) to pyruvate with subsequent transfer of electrons to cytochrome c. Is involved in the utilization of (S)-lactate as a sole source of carbon for growth. Can also use ferricyanide as an electron acceptor in vitro. This chain is L-lactate dehydrogenase (cytochrome) (CYB2), found in Saccharomyces cerevisiae (strain ATCC 204508 / S288c) (Baker's yeast).